The sequence spans 363 residues: Disease resistance protein RBA1 (363 aa).

Positions 12-175 constitute a TIR domain; sequence PVPKVFLSFR…EIVKEVERVL (164 aa). Residues 21-26 and G53 each bind NAD(+); that span reads RGEEIR. The active site involves E86.

As to quaternary structure, homooligomer; homooligomerization is required for activity.

The protein resides in the cytoplasm. Its subcellular location is the nucleus. It localises to the nucleoplasm. The enzyme catalyses NAD(+) + H2O = ADP-D-ribose + nicotinamide + H(+). The catalysed reaction is NADP(+) + H2O = ADP-D-ribose 2'-phosphate + nicotinamide + H(+). Its function is as follows. Disease resistance (R) protein that specifically recognizes the HopBA1 type III effector protein from P.syringae, and triggers cell death. Acts as a NAD(+) hydrolase (NADase): in response to pathogen-recognition, catalyzes cleavage of NAD(+) into ADP-D-ribose (ADPR) and nicotinamide; NAD(+) cleavage triggering a defense system that promotes cell death. In addition to ADPR, also generates a cyclization variant of cyclic ADPR (cADPR), termed v-cADPR, for which the cyclizing bond is unknown. Also able to hydrolyze NADP(+), but not other NAD(+)-related molecules. The sequence is that of Disease resistance protein RBA1 from Arabidopsis thaliana (Mouse-ear cress).